Reading from the N-terminus, the 224-residue chain is 7-cyano-7-deazaguanine synthase (224 aa).

8–18 (LSGGMDSAAVI) provides a ligand contact to ATP. Zn(2+) contacts are provided by cysteine 186, cysteine 196, cysteine 199, and cysteine 202.

Belongs to the QueC family. Zn(2+) serves as cofactor.

The catalysed reaction is 7-carboxy-7-deazaguanine + NH4(+) + ATP = 7-cyano-7-deazaguanine + ADP + phosphate + H2O + H(+). The protein operates within purine metabolism; 7-cyano-7-deazaguanine biosynthesis. Functionally, catalyzes the ATP-dependent conversion of 7-carboxy-7-deazaguanine (CDG) to 7-cyano-7-deazaguanine (preQ(0)). The sequence is that of 7-cyano-7-deazaguanine synthase from Xanthomonas axonopodis pv. citri (strain 306).